The chain runs to 196 residues: Imidazole glycerol phosphate synthase subunit HisH (196 aa).

The Glutamine amidotransferase type-1 domain occupies 2-196 (NVVILDTGCA…AKLLKNFLEM (195 aa)). The active-site Nucleophile is the cysteine 77. Catalysis depends on residues histidine 178 and glutamate 180.

Heterodimer of HisH and HisF.

The protein localises to the cytoplasm. The enzyme catalyses 5-[(5-phospho-1-deoxy-D-ribulos-1-ylimino)methylamino]-1-(5-phospho-beta-D-ribosyl)imidazole-4-carboxamide + L-glutamine = D-erythro-1-(imidazol-4-yl)glycerol 3-phosphate + 5-amino-1-(5-phospho-beta-D-ribosyl)imidazole-4-carboxamide + L-glutamate + H(+). The catalysed reaction is L-glutamine + H2O = L-glutamate + NH4(+). It participates in amino-acid biosynthesis; L-histidine biosynthesis; L-histidine from 5-phospho-alpha-D-ribose 1-diphosphate: step 5/9. In terms of biological role, IGPS catalyzes the conversion of PRFAR and glutamine to IGP, AICAR and glutamate. The HisH subunit catalyzes the hydrolysis of glutamine to glutamate and ammonia as part of the synthesis of IGP and AICAR. The resulting ammonia molecule is channeled to the active site of HisF. The protein is Imidazole glycerol phosphate synthase subunit HisH of Shigella dysenteriae serotype 1 (strain Sd197).